The primary structure comprises 530 residues: Autoinducer-2 kinase (530 aa).

The protein belongs to the FGGY kinase family.

It localises to the cytoplasm. The enzyme catalyses (S)-4,5-dihydroxypentane-2,3-dione + ATP = (2S)-2-hydroxy-3,4-dioxopentyl phosphate + ADP + H(+). In terms of biological role, catalyzes the phosphorylation of autoinducer-2 (AI-2) to phospho-AI-2, which subsequently inactivates the transcriptional regulator LsrR and leads to the transcription of the lsr operon. Phosphorylates the ring-open form of (S)-4,5-dihydroxypentane-2,3-dione (DPD), which is the precursor to all AI-2 signaling molecules, at the C5 position. This chain is Autoinducer-2 kinase, found in Yersinia pseudotuberculosis serotype O:3 (strain YPIII).